Consider the following 425-residue polypeptide: Histidine--tRNA ligase (425 aa).

It belongs to the class-II aminoacyl-tRNA synthetase family. In terms of assembly, homodimer.

The protein resides in the cytoplasm. It carries out the reaction tRNA(His) + L-histidine + ATP = L-histidyl-tRNA(His) + AMP + diphosphate + H(+). In Aeromonas salmonicida (strain A449), this protein is Histidine--tRNA ligase.